The primary structure comprises 635 residues: Ankyrin repeat and SOCS box protein 2 (635 aa).

The segment at 8 to 16 (RGSQCTIGQ) is required for FLNA degradation. In terms of domain architecture, UIM spans 26-45 (SEDELVQMAIEQSLADKTRG). ANK repeat units lie at residues 104–133 (APADPLIKAIKDGDEEALKTMIKEGKNLAE), 137–167 (EGWLPLHEAAYYGQVGCLKVLQRAYPGTIDQ), 171–200 (QEETAVYLATCRGHLDCLLSLLQAGAEPDI), 204–233 (SRETPLYKACERKNAEAVKILVQHNADTNH), 237–266 (RGWTALHESVSRNDLEVMQILVSGGAKVES), 270–299 (YGITPLFVAAQSGQLEALRFLAKYGADINT), 303–332 (DNASALYEACKNEHEEVVEFLLSQGADANK), 336–365 (DGLLPLHIASKKGNYRIVQMLLPVTSRTRI), 368–397 (SGVSPLHLAAERNHDEVLEALLSARFDVNT), 410–439 (RRSSALYFAVVNNNVYATELLLQHGADPNR), 440–469 (DVISPLLVAIRHGCLRTMQLLLDHGANIDA), and 476–504 (TAFPATIMFAMKCLSLLKFLMDLGCDGEP). Ser-371 bears the Phosphoserine; by MAPK mark. The 50-residue stretch at 586–635 (IKEKAEPPRPLAHLCRLRVRKAIGKYRIKLLDTLPLPGRLIRYLKYENTQ) folds into the SOCS box domain.

This sequence belongs to the ankyrin SOCS box (ASB) family. In terms of assembly, component of a probable ECS E3 ubiquitin-protein ligase complex which contains CUL5, either RBX1 or RNF7/RBX2, Elongin BC complex (ELOB and ELOC) and ASB2. Interacts with SKP2. Through its interaction with SKP2, likely to bridge the formation of dimeric E3-ubiquitin-protein ligase complexes composed of an ECS complex and an SCF(SKP2) complex. Interacts with JAK2; the interaction targets JAK2 for Notch-mediated proteasomal degradation. Interacts with TCF3/E2A; the interaction is mediated by SKP2 and targets TCF3 for Notch-mediated proteasomal degradation. As to quaternary structure, interacts with DES. In terms of processing, monoubiquitinated. Not monoubiquitinated. Post-translationally, phosphorylation at Ser-371 is required for association with FLNA and subsequent FLNA degradation. As to expression, expressed in muscle cells. In terms of tissue distribution, expressed in hematopoietic cells.

The protein localises to the cytoplasm. Its subcellular location is the cytoskeleton. It localises to the stress fiber. The protein resides in the myofibril. It is found in the sarcomere. The protein localises to the z line. It participates in protein modification; protein ubiquitination. In terms of biological role, substrate-recognition component of a SCF-like ECS (Elongin-Cullin-SOCS-box protein) E3 ubiquitin-protein ligase complex which mediates the ubiquitination and subsequent proteasomal degradation of target proteins. Mediates Notch-induced ubiquitination and degradation of substrates including TCF3/E2A and JAK2. Required during embryonic heart development for complete heart looping. Required for cardiomyocyte differentiation. Specifically promotes the ubiquitination of SMAD9 and targets it for proteasomal degradation, leading to avoid excessive accumulation of SMAD9. Plays a role in the regulation of NK-cell migration by modulating protein levels of filamin A/FLNA via regulation of its ubiquitination and proteasome degradation. Involved in myogenic differentiation and targets filamin FLNB for proteasomal degradation but not filamin FLNA. Also targets DES for proteasomal degradation. Acts as a negative regulator of skeletal muscle mass. Functionally, targets filamins FLNA and FLNB for proteasomal degradation. This leads to enhanced adhesion of hematopoietic cells to fibronectin. Required for FLNA degradation in immature cardiomyocytes which is necessary for actin cytoskeleton remodeling, leading to proper organization of myofibrils and function of mature cardiomyocytes. Required for degradation of FLNA and FLNB in immature dendritic cells (DC) which enhances immature DC migration by promoting DC podosome formation and DC-mediated degradation of the extracellular matrix. Does not promote proteasomal degradation of tyrosine-protein kinases JAK1 or JAK2 in hematopoietic cells. This chain is Ankyrin repeat and SOCS box protein 2 (ASB2), found in Homo sapiens (Human).